Consider the following 483-residue polypeptide: MYIGIDLGTSGVKAILLNEQGEVVASHTEKLTVSRPHPLWSEQDPEQWWLATDTAMKALGAHDSLRHVKGLGIAGQMHGATLLDKSLQVLRPAILWNDGRCAEECQLLEDKVSASRQITGNLMMPGFTAPKLLWVQRHEAAVFSQVDKVLLPKDYLRLRMTGELASDMSDAAGTMWLDVARRDWSDEMLAACDLSRDAMPALFEGSDVTGQLRPEVAQAWNMPPALVVGGGGDNAAGAVGIGMADAGQAMLSLGTSGVYFAVSEGFLSKPESAVHSFCHACRGRWHLMSVMLSAASCLDWAAKLTGLASVPALIAAAQTADESAGPVWFLPYLSGERTPHNNPQAKGVFFGLTHQHGPAELARAVLEGVGYALADGMDVVHACAIKPEAITLIGGGRARYWRQMLADISGLQLDYRTGGDVGPALGAARLAHVAVHDEADRPGLLKPLPLEQAHRPDDRRVAHYAPQREIFARIFSKLKPLMS.

Residue 77 to 78 (MH) participates in substrate binding. The active-site Proton acceptor is the Asp-233.

The protein belongs to the FGGY kinase family.

The enzyme catalyses D-xylulose + ATP = D-xylulose 5-phosphate + ADP + H(+). Catalyzes the phosphorylation of D-xylulose to D-xylulose 5-phosphate. This chain is Xylulose kinase, found in Klebsiella pneumoniae.